Consider the following 162-residue polypeptide: Nucleotide-binding protein Francci3_0558 (162 aa).

Belongs to the YajQ family.

In terms of biological role, nucleotide-binding protein. The sequence is that of Nucleotide-binding protein Francci3_0558 from Frankia casuarinae (strain DSM 45818 / CECT 9043 / HFP020203 / CcI3).